The sequence spans 844 residues: E3 ubiquitin-protein ligase BRE1-like 2 (844 aa).

2 coiled-coil regions span residues 1 to 38 and 160 to 240; these read MDAA…RDEQ and EDVI…QLQT. A disordered region spans residues 244–269; it reads SLMNTSAPNGVNGSVSTDKSSDKGMG. Over residues 245–261 the composition is skewed to polar residues; sequence LMNTSAPNGVNGSVSTD. 2 coiled-coil regions span residues 290-604 and 640-670; these read ELHE…SEIE and KMKQ…ESSK. The RING-type zinc-finger motif lies at 792–831; it reads CGVCFDRPKEVVITKCFHLFCSPCIQRNLEIRHRKCPGCG.

The protein belongs to the BRE1 family.

Its subcellular location is the nucleus. The enzyme catalyses S-ubiquitinyl-[E2 ubiquitin-conjugating enzyme]-L-cysteine + [acceptor protein]-L-lysine = [E2 ubiquitin-conjugating enzyme]-L-cysteine + N(6)-ubiquitinyl-[acceptor protein]-L-lysine.. It functions in the pathway protein modification; protein ubiquitination. Functionally, E3 ubiquitin-protein ligase that monoubiquitinates H2B to form H2BK143ub1. H2BK143ub1 gives a specific tag for epigenetic transcriptional activation and is also prerequisite for H3K4me and maybe H3K79me. It thereby plays a central role in histone code and gene regulation. Forms a ubiquitin ligase complex in cooperation with the E2 enzyme UBC2/RAD6. The polypeptide is E3 ubiquitin-protein ligase BRE1-like 2 (BRE1B) (Oryza sativa subsp. indica (Rice)).